We begin with the raw amino-acid sequence, 352 residues long: Protein-glutamate methylesterase/protein-glutamine glutaminase 2 (352 aa).

A Response regulatory domain is found at 1–116 (MVVDDSAVVR…KQFLTDSADE (116 aa)). Aspartate 50 carries the post-translational modification 4-aspartylphosphate. A CheB-type methylesterase domain is found at 162-352 (AQTTERIVAI…MAREIVTQLQ (191 aa)). Active-site residues include serine 174, histidine 200, and aspartate 296.

The protein belongs to the CheB family. In terms of processing, phosphorylated by CheA. Phosphorylation of the N-terminal regulatory domain activates the methylesterase activity.

It is found in the cytoplasm. The enzyme catalyses [protein]-L-glutamate 5-O-methyl ester + H2O = L-glutamyl-[protein] + methanol + H(+). It catalyses the reaction L-glutaminyl-[protein] + H2O = L-glutamyl-[protein] + NH4(+). Its function is as follows. Involved in chemotaxis. Part of a chemotaxis signal transduction system that modulates chemotaxis in response to various stimuli. Catalyzes the demethylation of specific methylglutamate residues introduced into the chemoreceptors (methyl-accepting chemotaxis proteins or MCP) by CheR. Also mediates the irreversible deamidation of specific glutamine residues to glutamic acid. The sequence is that of Protein-glutamate methylesterase/protein-glutamine glutaminase 2 from Xanthomonas axonopodis pv. citri (strain 306).